Here is a 63-residue protein sequence, read N- to C-terminus: Arabinogalactan peptide 3 (63 aa).

The signal sequence occupies residues 1–26 (MASRILYAAAVVAAVAVSSLAGVAYA). The GPI-anchor amidated serine moiety is linked to residue serine 36. The propeptide at 37–63 (GAAAVSSSLVAAVLCPAVALLLGNLRQ) is removed in mature form.

It belongs to the AG-peptide AGP family. O-glycosylated on hydroxyprolines; noncontiguous hydroxylproline residues are glycosylated with arabinogalactan. In terms of tissue distribution, expressed in roots, stems, leaves, flowers and seeds.

It is found in the vacuole. The protein localises to the aleurone grain membrane. Functionally, proteoglycan that seems to be implicated in diverse developmental roles such as differentiation, cell-cell recognition, embryogenesis and programmed cell death. The protein is Arabinogalactan peptide 3 (AGPEP3) of Oryza sativa subsp. japonica (Rice).